Here is a 243-residue protein sequence, read N- to C-terminus: Juxtaposed with another zinc finger protein 1 (243 aa).

The C2H2-type 1 zinc finger occupies 12 to 37 (NTCRFGGCGLHFPTLADLIEHIEDNH). The required for interaction with NR2C2 stretch occupies residues 39–79 (DTDPRVLEKQELQQPTYVALSYINRFMTDAARREQESLKKK). The span at 89–108 (SSSVSRGNVSTPPRHSSGSL) shows a compositional bias: polar residues. Residues 89 to 151 (SSSVSRGNVS…SDSDESWTTE (63 aa)) form a disordered region. Thr109 and Thr113 each carry phosphothreonine. Over residues 118-130 (PSSSFRSSTPTGS) the composition is skewed to low complexity. The span at 131-148 (EYDEEEVDYEESDSDESW) shows a compositional bias: acidic residues. The C2H2-type 2 zinc-finger motif lies at 173-198 (FACPVPGCKKRYKNVNGIKYHAKNGH). Residues 208–230 (FKCRCGKSYKTAQGLRHHTINFH) form a C2H2-type 3; degenerate zinc finger.

In terms of assembly, interacts with NR2C2 (via ligand-binding region). In terms of tissue distribution, highest expression in testis with moderate levels in colon, placenta, prostate and ovary and low levels in brain, spleen, liver and small intestine.

The protein resides in the nucleus. Functionally, acts as a transcriptional corepressor of orphan nuclear receptor NR2C2. Inhibits expression of the gluconeogenesis enzyme PCK2 through inhibition of NR2C2 activity. Also involved in transcriptional activation of NAMPT by promoting expression of PPARA and PPARD. Plays a role in lipid metabolism by suppressing lipogenesis, increasing lipolysis and decreasing lipid accumulation in adipose tissue. Plays a role in glucose homeostasis by improving glucose metabolism and insulin sensitivity. The chain is Juxtaposed with another zinc finger protein 1 from Homo sapiens (Human).